The chain runs to 670 residues: Protein HBS1 (670 aa).

Disordered regions lie at residues 60–88 (KDIQEEEADEDEDEDAAFAKARRDSESFQ) and 164–202 (KTVSKTVPTPPPKISLKEPRRGFEIPSPKVPSSPVVSGR). A compositionally biased stretch (acidic residues) spans 63–75 (QEEEADEDEDEDA). Residues 189 to 200 (PSPKVPSSPVVS) show a composition bias toward low complexity. The region spanning 245-468 (KSHIHMIVIG…DVIENFKIPE (224 aa)) is the tr-type G domain. The tract at residues 254 to 261 (GHVDAGKS) is G1. 254 to 261 (GHVDAGKS) serves as a coordination point for GTP. The G2 stretch occupies residues 310-314 (GITMD). A G3 region spans residues 331 to 334 (DAPG). GTP-binding positions include 393 to 396 (NKLD) and 432 to 434 (SGL). The segment at 393–396 (NKLD) is G4. The G5 stretch occupies residues 432–434 (SGL).

Belongs to the TRAFAC class translation factor GTPase superfamily. Classic translation factor GTPase family. As to quaternary structure, component of the Pelota-HBS1L complex, also named Dom34-Hbs1 complex, composed of pelo and HBS1. As to expression, expressed in ovaries (at protein level).

Its subcellular location is the cytoplasm. The catalysed reaction is GTP + H2O = GDP + phosphate + H(+). GTPase component of the Pelota-HBS1L complex, a complex that recognizes stalled ribosomes and triggers the No-Go Decay (NGD) pathway. The Pelota-HBS1L complex recognizes ribosomes stalled at the 3' end of an mRNA and engages stalled ribosomes by destabilizing mRNA in the mRNA channel. Following ribosome-binding, the Pelota-HBS1L complex promotes recruitment of pix, which drives the disassembly of stalled ribosomes, followed by degradation of damaged mRNAs as part of the NGD pathway. Together with pelo, required for transposon silencing in the ovary and testis. Together with pelo, promotes meiosis and spermatid individualization during spermatogenesis. In Drosophila melanogaster (Fruit fly), this protein is Protein HBS1.